A 225-amino-acid polypeptide reads, in one-letter code: uncharacterized protein (225 aa).

The PCI domain maps to 166-214 (LNSDVIKDKILAIIENVGEITYEELAEKINIPEEDLEKYLSELKESGDI).

This is an uncharacterized protein from Methanocaldococcus jannaschii (strain ATCC 43067 / DSM 2661 / JAL-1 / JCM 10045 / NBRC 100440) (Methanococcus jannaschii).